A 323-amino-acid polypeptide reads, in one-letter code: 4-diphosphocytidyl-2-C-methyl-D-erythritol kinase (323 aa).

Lysine 25 is a catalytic residue. Proline 110–alanine 120 lines the ATP pocket. Aspartate 152 is a catalytic residue.

Belongs to the GHMP kinase family. IspE subfamily.

The enzyme catalyses 4-CDP-2-C-methyl-D-erythritol + ATP = 4-CDP-2-C-methyl-D-erythritol 2-phosphate + ADP + H(+). Its pathway is isoprenoid biosynthesis; isopentenyl diphosphate biosynthesis via DXP pathway; isopentenyl diphosphate from 1-deoxy-D-xylulose 5-phosphate: step 3/6. In terms of biological role, catalyzes the phosphorylation of the position 2 hydroxy group of 4-diphosphocytidyl-2C-methyl-D-erythritol. The protein is 4-diphosphocytidyl-2-C-methyl-D-erythritol kinase of Mycobacterium leprae (strain Br4923).